A 428-amino-acid polypeptide reads, in one-letter code: Kynureninase (428 aa).

Pyridoxal 5'-phosphate contacts are provided by residues Thr104, Thr105, 132–135 (FPSD), Asp213, His216, and Tyr238. Lys239 is subject to N6-(pyridoxal phosphate)lysine. Residues Trp267 and Thr295 each coordinate pyridoxal 5'-phosphate.

Belongs to the kynureninase family. As to quaternary structure, homodimer. Pyridoxal 5'-phosphate serves as cofactor.

The enzyme catalyses L-kynurenine + H2O = anthranilate + L-alanine + H(+). The catalysed reaction is 3-hydroxy-L-kynurenine + H2O = 3-hydroxyanthranilate + L-alanine + H(+). It participates in amino-acid degradation; L-kynurenine degradation; L-alanine and anthranilate from L-kynurenine: step 1/1. The protein operates within cofactor biosynthesis; NAD(+) biosynthesis; quinolinate from L-kynurenine: step 2/3. Functionally, catalyzes the cleavage of L-kynurenine (L-Kyn) and L-3-hydroxykynurenine (L-3OHKyn) into anthranilic acid (AA) and 3-hydroxyanthranilic acid (3-OHAA), respectively. This Bacillus thuringiensis subsp. konkukian (strain 97-27) protein is Kynureninase.